The following is a 512-amino-acid chain: Histidine ammonia-lyase (512 aa).

Residues 145-147 constitute a cross-link (5-imidazolinone (Ala-Gly)); it reads ASG. Serine 146 is modified (2,3-didehydroalanine (Ser)).

Belongs to the PAL/histidase family. Post-translationally, contains an active site 4-methylidene-imidazol-5-one (MIO), which is formed autocatalytically by cyclization and dehydration of residues Ala-Ser-Gly.

It is found in the cytoplasm. The catalysed reaction is L-histidine = trans-urocanate + NH4(+). It participates in amino-acid degradation; L-histidine degradation into L-glutamate; N-formimidoyl-L-glutamate from L-histidine: step 1/3. The protein is Histidine ammonia-lyase of Pseudomonas fluorescens (strain SBW25).